Consider the following 866-residue polypeptide: Coiled-coil domain-containing protein 178 (866 aa).

The disordered stretch occupies residues M1–G21. Coiled coils occupy residues E157–A266, E292–C403, K439–V480, K514–L539, R570–K631, and E665–V705.

The protein is Coiled-coil domain-containing protein 178 (Ccdc178) of Mus musculus (Mouse).